Reading from the N-terminus, the 1710-residue chain is Centrosomal protein of 152 kDa (1710 aa).

3 disordered regions span residues M1–E27, H39–M79, and N108–E139. Residues M1 to G60 are interaction with PLK4. Acidic residues predominate over residues N14 to Y24. Basic and acidic residues predominate over residues N108–E123. Residues E234 to L490 adopt a coiled-coil conformation. The segment covering D587 to K604 has biased composition (basic and acidic residues). The segment at D587–S611 is disordered. Coiled coils occupy residues D615–D664, E700–E772, and A902–V993. Positions E1120–H1142 are disordered. Residues H1170–T1241 adopt a coiled-coil conformation. T1241 carries the post-translational modification Phosphothreonine.

It belongs to the CEP152 family. Interacts (via N-terminus) with PLK4; the interaction is mutally exclusive with a PLK4:CEP192 interaction. Interacts (via C-terminus) with CPAP (via-N-terminus). Interacts with CINP. Interacts with CDK5RAP2, WDR62, CEP63 and CEP131. CEP63, CDK5RAP2, CEP152, WDR62 are proposed to form a stepwise assembled complex at the centrosome forming a ring near parental centrioles. Interacts with DEUP1; this interaction recruits CEP152 to the deuterosome. The interactions with CEP63 and DEUP1 are mutually exclusive. Interacts with CCDC66.

Its subcellular location is the cytoplasm. It localises to the cytoskeleton. The protein resides in the microtubule organizing center. It is found in the centrosome. The protein localises to the centriole. In terms of biological role, necessary for centrosome duplication; the function also seems to involve CEP63, CDK5RAP2 and WDR62 through a stepwise assembled complex at the centrosome that recruits CDK2 required for centriole duplication. Acts as a molecular scaffold facilitating the interaction of PLK4 and CPAP, 2 molecules involved in centriole formation. Proposed to snatch PLK4 away from PLK4:CEP92 complexes in early G1 daughter centriole and to reposition PLK4 at the outer boundary of a newly forming CEP152 ring structure. Also plays a key role in deuterosome-mediated centriole amplification in multiciliated that can generate more than 100 centrioles. Overexpression of CEP152 can drive amplification of centrioles. This chain is Centrosomal protein of 152 kDa, found in Homo sapiens (Human).